The chain runs to 136 residues: Large ribosomal subunit protein uL16 (136 aa).

The protein belongs to the universal ribosomal protein uL16 family. Part of the 50S ribosomal subunit.

Functionally, binds 23S rRNA and is also seen to make contacts with the A and possibly P site tRNAs. The sequence is that of Large ribosomal subunit protein uL16 from Enterobacter sp. (strain 638).